The chain runs to 59 residues: MSDGTAAMGKKGRKRVHIRCRRCGRHSFHRRKGYCAACGFGRSKRLRSYNWVRKKKNRT.

Zn(2+)-binding residues include Cys20, Cys23, Cys35, and Cys38. The segment at 20-38 adopts a C4-type zinc-finger fold; that stretch reads CRRCGRHSFHRRKGYCAAC.

It belongs to the eukaryotic ribosomal protein eL37 family. It depends on Zn(2+) as a cofactor.

Functionally, binds to the 23S rRNA. In Archaeoglobus fulgidus (strain ATCC 49558 / DSM 4304 / JCM 9628 / NBRC 100126 / VC-16), this protein is Large ribosomal subunit protein eL37 (rpl37e).